A 353-amino-acid polypeptide reads, in one-letter code: MTAILERRESASLWNRFCDWITSTENRLYIGWFGVLMIPTLLTATSVFIIAFIAAPPVDIDGIREPVSGSLLYGNNIISGAIIPTSAAIGLHFYPIWEAASVDEWLYNGGPYELIVLHFLLGVACYMGREWELSFRLGMRPWIAVAYSAPVAAATAVFLIYPIGQGSFSDGMPLGISGTFNFMIVFQAEHNILMHPFHMLGVAGVFGGSLFSAMHGSLVTSSLIRETTENESANAGYKFGQEEETYNIVAAHGYFGRLIFQYASFNNSRSLHFFLAAWPVVGIWFTALGISTMAFNLNGFNFNQSVVDSQGRVINTWADIINRANLGMEVMHERNAHNFPLDLAAVEANSIDG.

Thr-2 is modified (N-acetylthreonine). Thr-2 carries the post-translational modification Phosphothreonine. The next 3 helical transmembrane spans lie at Tyr-29–Ser-46, His-118–Leu-133, and Trp-142–Ala-156. His-118 lines the chlorophyll a pocket. Tyr-126 serves as a coordination point for pheophytin a. Positions 170 and 189 each coordinate [CaMn4O5] cluster. The chain crosses the membrane as a helical span at residues Phe-197–Leu-218. His-198 is a binding site for chlorophyll a. Residues His-215 and Ser-264 to Phe-265 contribute to the a quinone site. His-215 lines the Fe cation pocket. His-272 serves as a coordination point for Fe cation. A helical transmembrane segment spans residues Phe-274–Leu-288. Residues His-332, Glu-333, Asp-342, and Ala-344 each contribute to the [CaMn4O5] cluster site. A propeptide spanning residues Ala-345–Gly-353 is cleaved from the precursor.

Belongs to the reaction center PufL/M/PsbA/D family. In terms of assembly, PSII is composed of 1 copy each of membrane proteins PsbA, PsbB, PsbC, PsbD, PsbE, PsbF, PsbH, PsbI, PsbJ, PsbK, PsbL, PsbM, PsbT, PsbX, PsbY, PsbZ, Psb30/Ycf12, at least 3 peripheral proteins of the oxygen-evolving complex and a large number of cofactors. It forms dimeric complexes. The D1/D2 heterodimer binds P680, chlorophylls that are the primary electron donor of PSII, and subsequent electron acceptors. It shares a non-heme iron and each subunit binds pheophytin, quinone, additional chlorophylls, carotenoids and lipids. D1 provides most of the ligands for the Mn4-Ca-O5 cluster of the oxygen-evolving complex (OEC). There is also a Cl(-1) ion associated with D1 and D2, which is required for oxygen evolution. The PSII complex binds additional chlorophylls, carotenoids and specific lipids. serves as cofactor. Post-translationally, tyr-161 forms a radical intermediate that is referred to as redox-active TyrZ, YZ or Y-Z. C-terminally processed by CTPA; processing is essential to allow assembly of the oxygen-evolving complex and thus photosynthetic growth.

The protein resides in the plastid. It is found in the chloroplast thylakoid membrane. It carries out the reaction 2 a plastoquinone + 4 hnu + 2 H2O = 2 a plastoquinol + O2. In terms of biological role, photosystem II (PSII) is a light-driven water:plastoquinone oxidoreductase that uses light energy to abstract electrons from H(2)O, generating O(2) and a proton gradient subsequently used for ATP formation. It consists of a core antenna complex that captures photons, and an electron transfer chain that converts photonic excitation into a charge separation. The D1/D2 (PsbA/PsbD) reaction center heterodimer binds P680, the primary electron donor of PSII as well as several subsequent electron acceptors. The protein is Photosystem II protein D1 of Cryptomeria japonica (Japanese cedar).